A 512-amino-acid polypeptide reads, in one-letter code: Alanine--glyoxylate aminotransferase 2, mitochondrial (512 aa).

The transit peptide at 1-39 directs the protein to the mitochondrion; sequence MSLAWRTLQKAFYLETSLRILQMRPSLSCASRIYVPKLT. K55 bears the N6-acetyllysine mark. An N6-acetyllysine; alternate modification is found at K69. The residue at position 69 (K69) is an N6-succinyllysine; alternate. At K82 the chain carries N6-acetyllysine. At K260 the chain carries N6-acetyllysine; alternate. Position 260 is an N6-succinyllysine; alternate (K260). N6-succinyllysine is present on K302. Position 348 is an N6-(pyridoxal phosphate)lysine (K348). N6-acetyllysine; alternate occurs at positions 415 and 418. 2 positions are modified to N6-succinyllysine; alternate: K415 and K418. N6-acetyllysine is present on K452.

Belongs to the class-III pyridoxal-phosphate-dependent aminotransferase family. As to quaternary structure, homotetramer. It depends on pyridoxal 5'-phosphate as a cofactor. Expressed in the liver, lung and kidney.

The protein localises to the mitochondrion. The enzyme catalyses glyoxylate + L-alanine = glycine + pyruvate. It catalyses the reaction (R)-3-amino-2-methylpropanoate + pyruvate = 2-methyl-3-oxopropanoate + L-alanine. It carries out the reaction 3-oxopropanoate + L-alanine = beta-alanine + pyruvate. The catalysed reaction is 2-oxobutanoate + L-alanine = (2S)-2-aminobutanoate + pyruvate. The enzyme catalyses N(omega),N(omega)-dimethyl-L-arginine + pyruvate = 5-(3,3-dimethylguanidino)-2-oxopentanoate + L-alanine. It catalyses the reaction N(omega),N('omega)-dimethyl-L-arginine + pyruvate = 5-(3,3'-dimethylguanidino)-2-oxopentanoate + L-alanine. It carries out the reaction N(omega),N(omega)-dimethyl-L-arginine + glyoxylate = 5-(3,3-dimethylguanidino)-2-oxopentanoate + glycine. The catalysed reaction is N(omega),N('omega)-dimethyl-L-arginine + glyoxylate = 5-(3,3'-dimethylguanidino)-2-oxopentanoate + glycine. The enzyme catalyses N(omega)-methyl-L-arginine + pyruvate = 5-(3-methylguanidino)-2-oxopentanoate + L-alanine. It catalyses the reaction N(omega)-methyl-L-arginine + glyoxylate = 5-(3-methylguanidino)-2-oxopentanoate + glycine. It carries out the reaction L-ornithine + pyruvate = 5-amino-2-oxopentanoate + L-alanine. The catalysed reaction is L-ornithine + glyoxylate = 5-amino-2-oxopentanoate + glycine. The enzyme catalyses (2S)-2-aminobutanoate + glyoxylate = 2-oxobutanoate + glycine. It catalyses the reaction N(omega),N(omega)-dimethyl-L-arginine + oxaloacetate = 5-(3,3-dimethylguanidino)-2-oxopentanoate + L-aspartate. It carries out the reaction oxaloacetate + L-alanine = L-aspartate + pyruvate. The catalysed reaction is N(omega),N(omega)-dimethyl-L-arginine + 2-oxobutanoate = 5-(3,3-dimethylguanidino)-2-oxopentanoate + (2S)-2-aminobutanoate. The enzyme catalyses 2-oxopentanoate + N(omega),N(omega)-dimethyl-L-arginine = 5-(3,3-dimethylguanidino)-2-oxopentanoate + L-2-aminopentanoate. It catalyses the reaction 2-oxohexanoate + N(omega),N(omega)-dimethyl-L-arginine = L-2-aminohexanoate + 5-(3,3-dimethylguanidino)-2-oxopentanoate. Inhibited by 5-fluorouracil and 6-fluorouracil. Inhibited by phenylhydrazine, hydroxylamine, l-amino-L-proline, para-chloromercuribenzoate and HgCl2. Multifunctional aminotransferase with a broad substrate specificity. Catalyzes the conversion of glyoxylate to glycine using alanine as the amino donor. Catalyzes metabolism of not L- but the D-isomer of D-beta-aminoisobutyric acid to generate 2-methyl-3-oxopropanoate and alanine. Catalyzes the transfer of the amino group from beta-alanine to pyruvate to yield L-alanine and 3-oxopropanoate. Can metabolize NG-monomethyl-L-arginine (NMMA), asymmetric NG,NG-dimethyl-L-arginine (ADMA) and symmetric NG,N'G-dimethyl-L-arginine (SDMA). ADMA is a potent inhibitor of nitric-oxide (NO) synthase, and this activity provides mechanism through which the kidney regulates blood pressure. The chain is Alanine--glyoxylate aminotransferase 2, mitochondrial (Agxt2) from Rattus norvegicus (Rat).